The primary structure comprises 541 residues: Chaperonin GroEL, cyanelle (541 aa).

ATP-binding positions include 29–32, 86–90, glycine 413, 479–481, and aspartate 495; these read TLGP, DGTTT, and NAA.

Belongs to the chaperonin (HSP60) family. Forms a cylinder of 14 subunits composed of two heptameric rings stacked back-to-back. Interacts with the co-chaperonin GroES.

Its subcellular location is the plastid. The protein localises to the cyanelle. The catalysed reaction is ATP + H2O + a folded polypeptide = ADP + phosphate + an unfolded polypeptide.. In terms of biological role, together with its co-chaperonin GroES, plays an essential role in assisting protein folding. The GroEL-GroES system forms a nano-cage that allows encapsulation of the non-native substrate proteins and provides a physical environment optimized to promote and accelerate protein folding. The protein is Chaperonin GroEL, cyanelle of Cyanophora paradoxa.